We begin with the raw amino-acid sequence, 230 residues long: Small ribosomal subunit protein uS3 (230 aa).

Positions 39–107 (IRKFLTEKLK…PAQINISEVR (69 aa)) constitute a KH type-2 domain.

Belongs to the universal ribosomal protein uS3 family. In terms of assembly, part of the 30S ribosomal subunit. Forms a tight complex with proteins S10 and S14.

Binds the lower part of the 30S subunit head. Binds mRNA in the 70S ribosome, positioning it for translation. The polypeptide is Small ribosomal subunit protein uS3 (Psychromonas ingrahamii (strain DSM 17664 / CCUG 51855 / 37)).